An 85-amino-acid polypeptide reads, in one-letter code: Defensin-like protein 112 (85 aa).

The N-terminal stretch at 1 to 24 (MAISKKMLTTFVLTILLAVSFVHC) is a signal peptide. 4 disulfides stabilise this stretch: Cys40–Cys80, Cys46–Cys71, Cys56–Cys78, and Cys60–Cys79.

Belongs to the DEFL family.

It is found in the secreted. The chain is Defensin-like protein 112 from Arabidopsis thaliana (Mouse-ear cress).